The chain runs to 247 residues: TM2 domain-containing protein 3 (247 aa).

An N-terminal signal peptide occupies residues 1–29 (MAGGVLPLRGLRALCRVLLFLSQFCILSG). Over 30 to 179 (GEQSQALAQS…RTFPKMLYCN (150 aa)) the chain is Extracellular. N-linked (GlcNAc...) asparagine glycosylation is found at Asn87, Asn122, Asn140, Asn157, Asn169, and Asn179. Residues 180–200 (WTGGYKWSTALALSITLGGFG) form a helical membrane-spanning segment. Residues 183–230 (GYKWSTALALSITLGGFGADRFYLGQWREGLGKLFSFGGLGIWTLIDV) enclose the TM2 domain. Topologically, residues 201–215 (ADRFYLGQWREGLGK) are cytoplasmic. The chain crosses the membrane as a helical span at residues 216–236 (LFSFGGLGIWTLIDVLLIGVG). The Extracellular portion of the chain corresponds to 237–247 (YVGPADGSLYI).

This sequence belongs to the TM2 family. Widely expressed.

It localises to the membrane. Its function is as follows. Probable positive regulator of Notch signaling. The sequence is that of TM2 domain-containing protein 3 (TM2D3) from Homo sapiens (Human).